A 407-amino-acid polypeptide reads, in one-letter code: Cell division control protein 12 (407 aa).

Residue S2 is modified to N-acetylserine. The Septin-type G domain maps to 31–314; it reads EGGTFTVMLC…ETYRRLRLEG (284 aa). The segment at 41-48 is G1 motif; sequence GESGLGKT. GTP is bound by residues 41–48, T75, G101, 180–188, G247, and R263; these read GESGLGKT and KADTLTAQE. Residues 98–101 form a G3 motif region; it reads DTPG. The tract at residues 179-182 is G4 motif; the sequence is AKAD. Residues 344-406 adopt a coiled-coil conformation; that stretch reads EEENALKKYF…KSLQVKKSHL (63 aa).

It belongs to the TRAFAC class TrmE-Era-EngA-EngB-Septin-like GTPase superfamily. Septin GTPase family. Component of the septin complex which consists of CDC3, CDC10, CDC11, CDC12 and probably SHS1 and rearranges to a cortical collar of highly ordered filaments at the mother-bud-neck. A complex formed by CDC3, CDC10, CDC11 and CDC12 is capable of forming long filaments in vitro and the components seem to be present in a 2:2:2:2 arrangement in vivo. The filaments are proposed to be formed by the end-to-end polymerization of CDC3-CDC12-CDC11 complexes with CDC10 serving as a bridge to bundle the polymers into paired filaments. Component of the GIN4 complex composed of at least BNI5, CDC3, CDC10, CDC11, CDC12, GIN4, NAP1 and SHS1. Self-associates. Interacts with SYP1.

It is found in the membrane. It localises to the bud neck. Functionally, septins are GTPases involved in cytokinesis that assemble early in the cell cycle as a patch at the incipient bud site and form a ring approximate 15 minutes before bud emergence, which transforms into an hour-glass shaped collar of cortical filaments that spans both sides of the mother-bud neck. This collar persists until just before cytokinesis, when it splits into two rings that occupy opposite sides of the neck. The septins at the bud neck serve as a structural scaffold that recruits different components involved in diverse processes at specific stages during the cell cycle. Many proteins bind asymmetrically to the septin collar. The septin assembly is regulated by protein kinases GIN4 and/or CLA4. May act by recruiting MYO1 and HOF1, a protein involved in septation, to the site of cleavage. Septins are also involved in cell morphogenesis, bud site selection, chitin deposition, cell cycle regulation, cell compartmentalization and spore wall formation. The polypeptide is Cell division control protein 12 (CDC12) (Saccharomyces cerevisiae (strain ATCC 204508 / S288c) (Baker's yeast)).